Consider the following 387-residue polypeptide: 8-amino-7-oxononanoate synthase (387 aa).

R19 lines the substrate pocket. A pyridoxal 5'-phosphate-binding site is contributed by 106–107 (GY). H131 is a binding site for substrate. Residues S177, H205, and T234 each coordinate pyridoxal 5'-phosphate. K237 is subject to N6-(pyridoxal phosphate)lysine. T351 serves as a coordination point for substrate.

This sequence belongs to the class-II pyridoxal-phosphate-dependent aminotransferase family. BioF subfamily. In terms of assembly, homodimer. Pyridoxal 5'-phosphate serves as cofactor.

It catalyses the reaction 6-carboxyhexanoyl-[ACP] + L-alanine + H(+) = (8S)-8-amino-7-oxononanoate + holo-[ACP] + CO2. The protein operates within cofactor biosynthesis; biotin biosynthesis. Its function is as follows. Catalyzes the decarboxylative condensation of pimeloyl-[acyl-carrier protein] and L-alanine to produce 8-amino-7-oxononanoate (AON), [acyl-carrier protein], and carbon dioxide. In Methylococcus capsulatus (strain ATCC 33009 / NCIMB 11132 / Bath), this protein is 8-amino-7-oxononanoate synthase.